The following is a 428-amino-acid chain: Tyrosine--tRNA ligase (428 aa).

Tyrosine 41 is an L-tyrosine binding site. Positions 46-55 (PTADSLHLGH) match the 'HIGH' region motif. 2 residues coordinate L-tyrosine: tyrosine 179 and glutamine 183. A 'KMSKS' region motif is present at residues 239-243 (KFGKT). Lysine 242 is a binding site for ATP. Residues 361–418 (ADLLQALVDSELQPSRGQARKTVASNAVTINGEKQADPEYVFSDSDRLFGRYTLLRRG) enclose the S4 RNA-binding domain.

This sequence belongs to the class-I aminoacyl-tRNA synthetase family. TyrS type 1 subfamily. In terms of assembly, homodimer.

It is found in the cytoplasm. The enzyme catalyses tRNA(Tyr) + L-tyrosine + ATP = L-tyrosyl-tRNA(Tyr) + AMP + diphosphate + H(+). Its function is as follows. Catalyzes the attachment of tyrosine to tRNA(Tyr) in a two-step reaction: tyrosine is first activated by ATP to form Tyr-AMP and then transferred to the acceptor end of tRNA(Tyr). The chain is Tyrosine--tRNA ligase from Klebsiella pneumoniae subsp. pneumoniae (strain ATCC 700721 / MGH 78578).